Consider the following 927-residue polypeptide: 2-oxoadipate dehydrogenase complex component E1 (927 aa).

The protein belongs to the alpha-ketoglutarate dehydrogenase family. The 2-oxoadipate dehydrogenase complex is composed of OADH (2-oxoadipate dehydrogenase; E1a), DLST (dihydrolipoamide succinyltransferase; E2) and DLD (dihydrolipoamide dehydrogenase; E3). E1a functional unit is a dimer. Thiamine diphosphate is required as a cofactor.

The protein resides in the mitochondrion. The catalysed reaction is N(6)-[(R)-lipoyl]-L-lysyl-[protein] + 2-oxoadipate + H(+) = N(6)-[(R)-S(8)-glutaryldihydrolipoyl]-L-lysyl-[protein] + CO2. The protein operates within amino-acid degradation. In terms of biological role, 2-oxoadipate dehydrogenase (E1a) component of the 2-oxoadipate dehydrogenase complex (OADHC). Participates in the first step, rate limiting for the overall conversion of 2-oxoadipate (alpha-ketoadipate) to glutaryl-CoA and CO(2) catalyzed by the whole OADHC. Catalyzes the irreversible decarboxylation of 2-oxoadipate via the thiamine diphosphate (ThDP) cofactor and subsequent transfer of the decarboxylated acyl intermediate on an oxidized dihydrolipoyl group that is covalently amidated to the E2 enzyme (dihydrolipoyllysine-residue succinyltransferase or DLST). Can catalyze the decarboxylation of 2-oxoglutarate in vitro, but at a much lower rate than 2-oxoadipate. Responsible for the last step of L-lysine, L-hydroxylysine and L-tryptophan catabolism with the common product being 2-oxoadipate. The protein is 2-oxoadipate dehydrogenase complex component E1 (dhtkd1) of Xenopus laevis (African clawed frog).